The sequence spans 131 residues: UPF0102 protein YraN (131 aa).

Polar residues predominate over residues 1–19 (MATVPTRSGSPRQLTTKQT). A disordered region spans residues 1–20 (MATVPTRSGSPRQLTTKQTG).

The protein belongs to the UPF0102 family.

The sequence is that of UPF0102 protein YraN from Escherichia coli O17:K52:H18 (strain UMN026 / ExPEC).